Reading from the N-terminus, the 436-residue chain is Chorismate synthase, chloroplastic (436 aa).

Residues 1 to 24 (MASSSLTSKSILGSTKLGSSSLPS) are disordered. A chloroplast-targeting transit peptide spans 1–50 (MASSSLTSKSILGSTKLGSSSLPSELRRLSSPAVQISLRTQTRKNFQIQA).

The protein belongs to the chorismate synthase family. In terms of assembly, homotetramer. FMNH2 serves as cofactor.

It localises to the plastid. The protein localises to the chloroplast. It catalyses the reaction 5-O-(1-carboxyvinyl)-3-phosphoshikimate = chorismate + phosphate. Its pathway is metabolic intermediate biosynthesis; chorismate biosynthesis; chorismate from D-erythrose 4-phosphate and phosphoenolpyruvate: step 7/7. Catalyzes the last common step of the biosynthesis of aromatic amino acids, produced via the shikimic acid pathway. The protein is Chorismate synthase, chloroplastic (EMB1144) of Arabidopsis thaliana (Mouse-ear cress).